A 621-amino-acid polypeptide reads, in one-letter code: UvrABC system protein C (621 aa).

A GIY-YIG domain is found at 13-92; the sequence is EKPGVYLMKN…IKKYRPRYNI (80 aa). In terms of domain architecture, UVR spans 204-239; the sequence is NEVINDLKIKMEKASSELKFEEAASFRDKLLAVEKI.

The protein belongs to the UvrC family. In terms of assembly, interacts with UvrB in an incision complex.

Its subcellular location is the cytoplasm. Its function is as follows. The UvrABC repair system catalyzes the recognition and processing of DNA lesions. UvrC both incises the 5' and 3' sides of the lesion. The N-terminal half is responsible for the 3' incision and the C-terminal half is responsible for the 5' incision. The chain is UvrABC system protein C from Clostridium novyi (strain NT).